We begin with the raw amino-acid sequence, 830 residues long: Leucine--tRNA ligase (830 aa).

The 'HIGH' region signature appears at 34–44 (PYPSGNIHMGH). Residues 592 to 596 (KMSKS) carry the 'KMSKS' region motif. Lys-595 is an ATP binding site.

Belongs to the class-I aminoacyl-tRNA synthetase family.

The protein resides in the cytoplasm. The enzyme catalyses tRNA(Leu) + L-leucine + ATP = L-leucyl-tRNA(Leu) + AMP + diphosphate. This Ehrlichia ruminantium (strain Welgevonden) protein is Leucine--tRNA ligase.